Consider the following 233-residue polypeptide: Octanoyltransferase (233 aa).

The BPL/LPL catalytic domain occupies 33–216 (GRAQDTVILL…HLVRALSSNG (184 aa)). Residues 71-78 (RGGRITWH), 146-148 (AIG), and 159-161 (GFA) each bind substrate. Cysteine 177 (acyl-thioester intermediate) is an active-site residue.

It belongs to the LipB family.

The protein localises to the cytoplasm. The enzyme catalyses octanoyl-[ACP] + L-lysyl-[protein] = N(6)-octanoyl-L-lysyl-[protein] + holo-[ACP] + H(+). Its pathway is protein modification; protein lipoylation via endogenous pathway; protein N(6)-(lipoyl)lysine from octanoyl-[acyl-carrier-protein]: step 1/2. Its function is as follows. Catalyzes the transfer of endogenously produced octanoic acid from octanoyl-acyl-carrier-protein onto the lipoyl domains of lipoate-dependent enzymes. Lipoyl-ACP can also act as a substrate although octanoyl-ACP is likely to be the physiological substrate. This is Octanoyltransferase from Clavibacter michiganensis subsp. michiganensis (strain NCPPB 382).